The sequence spans 146 residues: Universal stress protein A homolog 2 (146 aa).

It belongs to the universal stress protein A family. In terms of assembly, homodimer.

It localises to the cytoplasm. In terms of biological role, involved in stress response. This chain is Universal stress protein A homolog 2 (uspA2), found in Coxiella burnetii (strain RSA 493 / Nine Mile phase I).